Here is a 289-residue protein sequence, read N- to C-terminus: Aquaporin PIP2-3 (289 aa).

The interval 1-25 (MAKQDIEASGPEAGEFSAKDYTDPP) is disordered. The next 2 helical transmembrane spans lie at 43–63 (AVIA…ATVI) and 80–100 (CGGV…FILV). The NPA 1 motif lies at 112-114 (NPA). 3 helical membrane-spanning segments follow: residues 131–151 (LLYI…VKGF), 173–193 (GTGL…VFSA), and 207–227 (VLAP…TIPI). Positions 233–235 (NPA) match the NPA 2 motif. The helical transmembrane segment at 255–275 (IFWVGPLIGAAIAAAYHQYVL) threads the bilayer.

The protein belongs to the MIP/aquaporin (TC 1.A.8) family. PIP (TC 1.A.8.11) subfamily.

Its subcellular location is the cell membrane. Its function is as follows. Aquaporins facilitate the transport of water and small neutral solutes across cell membranes. The protein is Aquaporin PIP2-3 (PIP2-3) of Zea mays (Maize).